A 227-amino-acid chain; its full sequence is Charged multivesicular body protein 4c (227 aa).

The tract at residues methionine 1–glutamine 27 is disordered. 2 coiled-coil regions span residues lysine 32 to glutamate 94 and leucine 129 to valine 187. Positions glutamate 178 to threonine 227 are disordered. Over residues leucine 189 to proline 206 the composition is skewed to low complexity.

It belongs to the SNF7 family. Probable core component of the endosomal sorting required for transport complex III (ESCRT-III). ESCRT-III components are thought to multimerize to form a flat lattice on the perimeter membrane of the endosome.

It is found in the cytoplasm. Its subcellular location is the cytosol. The protein localises to the late endosome membrane. Functionally, probable core component of the endosomal sorting required for transport complex III (ESCRT-III) which is involved in multivesicular bodies (MVBs) formation and sorting of endosomal cargo proteins into MVBs. MVBs contain intraluminal vesicles (ILVs) that are generated by invagination and scission from the limiting membrane of the endosome and mostly are delivered to lysosomes enabling degradation of membrane proteins, such as stimulated growth factor receptors, lysosomal enzymes and lipids. Key component of the cytokinesis checkpoint, a process required to delay abscission to prevent both premature resolution of intercellular chromosome bridges and accumulation of DNA damage. This is Charged multivesicular body protein 4c (chmp4c) from Xenopus laevis (African clawed frog).